A 268-amino-acid chain; its full sequence is MMQRCLRLQKPLALRRGLHLAQVNSQAVATEAPEAEPLDAFERQYLKERIEISPFQRLFLGTGSSIAALLNPRRHDMIACLGETTGEDALWTILDTMQASEEGQRIMADKPRIHTSTIDFKYLETLPPDTFGAAYVKFLKDNQVTPDSRMAVRFLEDPKLAYLMTRYRECHDLIHTVLDMPTNMLGEVAVKWVEALNTGLPMCYGGAVFGAVRLRPKQRRAYLKHYLPWALENGKRAKPLMPVYWEKRWEQNIHELRSELGITVLNKA.

Residues 1–25 constitute a mitochondrion transit peptide; the sequence is MMQRCLRLQKPLALRRGLHLAQVNS. Positions 171, 172, 175, and 187 each coordinate Zn(2+).

It belongs to the COQ4 family. As to quaternary structure, component of a multi-subunit COQ enzyme complex. The cofactor is Zn(2+).

It is found in the mitochondrion inner membrane. The enzyme catalyses a 4-hydroxy-3-methoxy-5-(all-trans-polyprenyl)benzoate + H(+) = a 2-methoxy-6-(all-trans-polyprenyl)phenol + CO2. It participates in cofactor biosynthesis; ubiquinone biosynthesis. In terms of biological role, lyase that catalyzes the C1-decarboxylation of 4-hydroxy-3-methoxy-5-(all-trans-polyprenyl)benzoic acid into 2-methoxy-6-(all-trans-polyprenyl)phenol during ubiquinone biosynthesis. The polypeptide is Ubiquinone biosynthesis protein COQ4 homolog, mitochondrial (Drosophila simulans (Fruit fly)).